A 298-amino-acid chain; its full sequence is Acetylglutamate kinase (298 aa).

Substrate is bound by residues 69–70 (GG), arginine 91, and asparagine 196.

This sequence belongs to the acetylglutamate kinase family. ArgB subfamily.

It localises to the cytoplasm. The catalysed reaction is N-acetyl-L-glutamate + ATP = N-acetyl-L-glutamyl 5-phosphate + ADP. It participates in amino-acid biosynthesis; L-arginine biosynthesis; N(2)-acetyl-L-ornithine from L-glutamate: step 2/4. Its function is as follows. Catalyzes the ATP-dependent phosphorylation of N-acetyl-L-glutamate. The polypeptide is Acetylglutamate kinase (Rhodopseudomonas palustris (strain BisB5)).